Here is a 704-residue protein sequence, read N- to C-terminus: MPSKEFIIPLILLCFYSVNGFVAVISSLVELFIHKASWNSIKIFFYSLLILQCLCRCIIIGWGMIETVQGGEFYSNFPSLLFISYAGLVALQMIQFLPNDNQYLLLSEGKKNNHKVKVGTNILIFFNLFMYFGMFLLFGIAEKQVGNSTSFNHHGNHNSTTSTSTDEIPLVSTEVGELYLFGDKDPIYIVLDCFYFVCLLLLLIFHSYVGWKTYKRNKDLFGIKLNVIHLILLICIFIRSLLVIIDPSSPNNSILHIDTESWLIYIYTISYYVVGEIIPGMLLIVIEFLLPYHKRKDFINIGGELSSYQDVWKSENIAIHELLGMGGSGAMVHKCTVKKGPLRGGTFAVKVMKDCTNEDIESLENEIRVYEKLKSPYIVSYQGSSKVVGSSGQIFEIRLFMEYIPHTLDKYLLARSVCGDSNGGGSSRNLKNYFLHMQEYQSSPQSSISYYQNNNNNNNNSPLIQPQQQQQYVYPYYFRYSQVVWYLYQISIGLDNLHANKIAHRDLKSNNIFVTLSESEVKICKIGDFDISRSFNNPKVLNVLSNPTALQQQKLNNFFQSATTTTTTEQTTEPIEVAATTTPQTIHSAFQHDILSFGFIVLDFLTLSNYSCFDSKFDTSNYYDDDKFNNKSNTKIKKPDLPDYIKKDEKLWEPVIQLYKSCTSDDPNKRPSSLGVKFHLANLYKDIIESGTEVWSIEKDSSSK.

The Extracellular segment spans residues 1–5 (MPSKE). Residues 6-26 (FIIPLILLCFYSVNGFVAVIS) form a helical membrane-spanning segment. The Cytoplasmic segment spans residues 27-42 (SLVELFIHKASWNSIK). Residues 43-63 (IFFYSLLILQCLCRCIIIGWG) form a helical membrane-spanning segment. Over 64–76 (MIETVQGGEFYSN) the chain is Extracellular. Residues 77-97 (FPSLLFISYAGLVALQMIQFL) traverse the membrane as a helical segment. At 98 to 121 (PNDNQYLLLSEGKKNNHKVKVGTN) the chain is on the cytoplasmic side. Residues 122 to 142 (ILIFFNLFMYFGMFLLFGIAE) traverse the membrane as a helical segment. The Extracellular segment spans residues 143–185 (KQVGNSTSFNHHGNHNSTTSTSTDEIPLVSTEVGELYLFGDKD). Asparagine 147 and asparagine 158 each carry an N-linked (GlcNAc...) asparagine glycan. A helical membrane pass occupies residues 186–206 (PIYIVLDCFYFVCLLLLLIFH). The Cytoplasmic portion of the chain corresponds to 207-224 (SYVGWKTYKRNKDLFGIK). The helical transmembrane segment at 225-245 (LNVIHLILLICIFIRSLLVII) threads the bilayer. At 246–265 (DPSSPNNSILHIDTESWLIY) the chain is on the extracellular side. N-linked (GlcNAc...) asparagine glycosylation is present at asparagine 251. A helical transmembrane segment spans residues 266 to 286 (IYTISYYVVGEIIPGMLLIVI). Topologically, residues 287–704 (EFLLPYHKRK…WSIEKDSSSK (418 aa)) are cytoplasmic. Positions 317–682 (IAIHELLGMG…SLGVKFHLAN (366 aa)) constitute a Protein kinase domain. ATP contacts are provided by residues 323–331 (LGMGGSGAM) and lysine 350. Catalysis depends on aspartate 506, which acts as the Proton acceptor.

The protein belongs to the protein kinase superfamily. Ser/Thr protein kinase family.

It localises to the membrane. The enzyme catalyses L-seryl-[protein] + ATP = O-phospho-L-seryl-[protein] + ADP + H(+). It carries out the reaction L-threonyl-[protein] + ATP = O-phospho-L-threonyl-[protein] + ADP + H(+). The chain is Seven transmembrane domain-containing serine/threonine-protein kinase 2 (7tmk2) from Dictyostelium discoideum (Social amoeba).